We begin with the raw amino-acid sequence, 277 residues long: Putative thiosulfate sulfurtransferase (277 aa).

Rhodanese domains are found at residues 18-125 (DSAN…PLST) and 154-274 (SIKI…VPIE). C233 acts as the Cysteine persulfide intermediate in catalysis. Residue R238 coordinates substrate.

The catalysed reaction is thiosulfate + hydrogen cyanide = thiocyanate + sulfite + 2 H(+). Its function is as follows. May be a sulfotransferase involved in the formation of thiosulfate. The sequence is that of Putative thiosulfate sulfurtransferase (cysA) from Mycobacterium leprae (strain TN).